A 148-amino-acid polypeptide reads, in one-letter code: Deoxyuridine 5'-triphosphate nucleotidohydrolase (148 aa).

This sequence belongs to the dUTPase family. Mg(2+) serves as cofactor.

It catalyses the reaction dUTP + H2O = dUMP + diphosphate + H(+). It participates in pyrimidine metabolism; dUMP biosynthesis; dUMP from dCTP (dUTP route): step 2/2. This enzyme decreases the intracellular concentration of dUTP so that uracil cannot be incorporated into viral progeny DNA. This activity is sufficient to exclude uracil from the DNA during phage replication. In the case of dUTPase mutant phages, the host dUTPase activity is not sufficient to exclude uracil from T5 DNA and uracil are incorporated, leading to decreased phage viability. This is Deoxyuridine 5'-triphosphate nucleotidohydrolase (DUT) from Escherichia coli (Enterobacteria phage T5).